Here is a 186-residue protein sequence, read N- to C-terminus: Ribosome-recycling factor (186 aa).

This sequence belongs to the RRF family.

It localises to the cytoplasm. Responsible for the release of ribosomes from messenger RNA at the termination of protein biosynthesis. May increase the efficiency of translation by recycling ribosomes from one round of translation to another. This Rubrobacter xylanophilus (strain DSM 9941 / JCM 11954 / NBRC 16129 / PRD-1) protein is Ribosome-recycling factor.